We begin with the raw amino-acid sequence, 210 residues long: Acetoin utilization protein AcuA (210 aa).

Positions 20–161 (LIEGPVSPED…YRKIMEKMMN (142 aa)) constitute an N-acetyltransferase domain.

The protein belongs to the acetyltransferase family. In terms of assembly, monomer.

Its pathway is ketone degradation; acetoin degradation. Activity is sensitive to salt concentration, a high concentration of KCL (500 mM) is needed for complete inactivation. In terms of biological role, part of the acuABC operon, which is possibly involved in the breakdown of acetoin and butanediol. Acts as an acetyltransferase inactivating acetyl-CoA synthetase AcsA via acetylation at a Lys residue. This Bacillus subtilis (strain 168) protein is Acetoin utilization protein AcuA (acuA).